The chain runs to 256 residues: N-acetyl-D-glucosamine kinase (256 aa).

ATP is bound by residues 4–11 (GFDMGGTK) and 133–140 (GVGGGLIV). Residues His-157, Cys-177, Cys-179, and Cys-184 each coordinate Zn(2+).

This sequence belongs to the ROK (NagC/XylR) family. NagK subfamily.

It carries out the reaction N-acetyl-D-glucosamine + ATP = N-acetyl-D-glucosamine 6-phosphate + ADP + H(+). Its pathway is cell wall biogenesis; peptidoglycan recycling. In terms of biological role, catalyzes the phosphorylation of N-acetyl-D-glucosamine (GlcNAc) derived from cell-wall degradation, yielding GlcNAc-6-P. This chain is N-acetyl-D-glucosamine kinase (nagK), found in Yersinia pestis bv. Antiqua (strain Nepal516).